Reading from the N-terminus, the 111-residue chain is UPF0339 protein in ptx operon 5'region (111 aa).

Tandem repeats lie at residues 10 to 58 and 61 to 109.

The protein belongs to the UPF0339 family. Duplicated subfamily.

The polypeptide is UPF0339 protein in ptx operon 5'region (Stutzerimonas stutzeri (Pseudomonas stutzeri)).